A 256-amino-acid chain; its full sequence is Nuclear shuttle protein (256 aa).

The Bipartite nuclear localization signal motif lies at 21-42; that stretch reads NSLIRQQSLFKRNVSKRRPFQT. Residues 81–96 carry the Nuclear localization signal motif; that stretch reads DIAKSLPNRTRSYIKL. Residues 150 to 187 form an interaction with Arabidopsis thaliana NSI protein region; sequence ELFGARIHSHGNLAIVPSLKDRFYIRHVLKRVISVEKD.

This sequence belongs to the begomovirus nuclear shuttle protein family. Binds to single-stranded and double-stranded viral DNA. Interacts with the host nuclear shuttle interacting (NSI) protein. This interaction may allow NSP to recruit NSI monomers to the viral genome and thus regulate nuclear export of viral genome by NSP.

It is found in the host nucleus. It localises to the host cytoplasm. The protein localises to the host cell membrane. Its function is as follows. Binds to the genomic viral ssDNA, shuttles it into and out of the cell nucleus. Begomoviruses use 2 proteins to transport their DNA from cell to cell. The nuclear shuttle protein (NSP) shuttles it between nucleus and cytoplasm and the movement protein (MP) probably transports the DNA-NSP complex to the cell periphery and facilitates movement across the cell wall. In Potato yellow mosaic virus (isolate Venezuela) (PYMV), this protein is Nuclear shuttle protein.